We begin with the raw amino-acid sequence, 186 residues long: Peptidyl-tRNA hydrolase (186 aa).

Tyr-14 is a binding site for tRNA. The Proton acceptor role is filled by His-19. TRNA-binding residues include Tyr-64, Asn-66, and Asn-112.

Belongs to the PTH family. Monomer.

The protein resides in the cytoplasm. It catalyses the reaction an N-acyl-L-alpha-aminoacyl-tRNA + H2O = an N-acyl-L-amino acid + a tRNA + H(+). Its function is as follows. Hydrolyzes ribosome-free peptidyl-tRNAs (with 1 or more amino acids incorporated), which drop off the ribosome during protein synthesis, or as a result of ribosome stalling. Catalyzes the release of premature peptidyl moieties from peptidyl-tRNA molecules trapped in stalled 50S ribosomal subunits, and thus maintains levels of free tRNAs and 50S ribosomes. The protein is Peptidyl-tRNA hydrolase of Geobacillus kaustophilus (strain HTA426).